The sequence spans 24 residues: Heat shock 70 kDa protein 4L (24 aa).

T19 bears the Phosphothreonine mark.

Belongs to the heat shock protein 70 family. Homodimer. In the testis, forms a complex with p53 at 32.5 degrees Celsius which is scrotal temperature but not at 37 or 42 degrees Celsius. As to expression, expressed at high levels in testis and at much lower levels in brain. In testis, expressed mainly in germ cells. Widespread in brain with highest expression in cerebellum and medulla oblongata. Also expressed in renal medulla of water-restricted animals.

It is found in the cytoplasm. Its subcellular location is the nucleus. Its function is as follows. Possesses chaperone activity in vitro where it inhibits aggregation of citrate synthase. The sequence is that of Heat shock 70 kDa protein 4L (Hspa4l) from Rattus norvegicus (Rat).